The primary structure comprises 255 residues: H-2 class II histocompatibility antigen, E-U alpha chain (255 aa).

Residues 1-25 form the signal peptide; the sequence is MATIGALLLRFFFIAVLMSSQKSWA. Residues 26–109 are alpha-1; that stretch reads IKEEHTIIQA…KRSNNTPDAN (84 aa). At 26–217 the chain is on the extracellular side; that stretch reads IKEEHTIIQA…KTLLPETKEN (192 aa). The segment at 110–203 is alpha-2; sequence VAPEVTVLSR…GLEEPLRKHW (94 aa). The region spanning 112–204 is the Ig-like C1-type domain; the sequence is PEVTVLSRSP…LEEPLRKHWE (93 aa). A disulfide bridge links cysteine 132 with cysteine 188. Asparagine 143 is a glycosylation site (N-linked (GlcNAc...) asparagine). The tract at residues 204 to 216 is connecting peptide; sequence EFEEKTLLPETKE. The chain crosses the membrane as a helical span at residues 218 to 238; sequence VVCALGLFVGLVGIVVGIILI. Residues 239-255 are Cytoplasmic-facing; the sequence is MKGIKKRNVVERRQGAL.

The protein belongs to the MHC class II family.

It localises to the membrane. The polypeptide is H-2 class II histocompatibility antigen, E-U alpha chain (H2-Ea) (Mus musculus (Mouse)).